We begin with the raw amino-acid sequence, 76 residues long: Omega-conotoxin-like TxO2 (76 aa).

Positions 1 to 22 (MKLTCVVIVAVLFLTAWTFVTA) are cleaved as a signal peptide. The propeptide occupies 23–52 (APHSSNALENLYLKAHHEMNNPEDSELNKR). Disulfide bonds link Cys53/Cys67, Cys60/Cys71, and Cys66/Cys75.

This sequence belongs to the conotoxin O1 superfamily. Expressed by the venom duct.

It is found in the secreted. In terms of biological role, omega-conotoxins act at presynaptic membranes, they bind and block voltage-gated calcium channels (Cav). This Conus textile (Cloth-of-gold cone) protein is Omega-conotoxin-like TxO2.